A 115-amino-acid polypeptide reads, in one-letter code: Toxin CSTX-9 (115 aa).

An N-terminal signal peptide occupies residues 1–20 (MKVLVICAVLFLAIFSNSSA). Residues 21 to 47 (ETEDDFLEDESFEADDVIPFLAREQVR) constitute a propeptide that is removed on maturation. Cystine bridges form between Cys-53–Cys-68, Cys-60–Cys-77, Cys-67–Cys-95, and Cys-79–Cys-93.

Belongs to the neurotoxin 19 (CSTX) family. In terms of assembly, monomer. Interacts with CSTX-13 (AC P83919) (Kd=370 nM), but does not interact with CSTX-1 (AC P81694). Expressed by the venom gland.

It is found in the secreted. The protein localises to the target cell membrane. Functionally, synergistic toxin that induces or increases a cytolytic effect when combined with CSTX-1 (AC P81694) or CSTX-13 (AC P83919). Potassium ions and M-ctenitoxin-Cs1a (AC P83619) have also an effect on its activity. When alone, has no insecticidal activity. In Cupiennius salei (American wandering spider), this protein is Toxin CSTX-9.